The following is a 29-amino-acid chain: Alpha-amylase inhibitor 2 (29 aa).

Belongs to the protease inhibitor I6 (cereal trypsin/alpha-amylase inhibitor) family.

It localises to the secreted. Alpha-amylase inhibitor. The protein is Alpha-amylase inhibitor 2 of Saussurea costus (Costus).